A 169-amino-acid chain; its full sequence is Putative tRNA (cytidine(34)-2'-O)-methyltransferase (169 aa).

S-adenosyl-L-methionine is bound by residues Ile79, Gly104, Ile125, and Ser133.

Belongs to the class IV-like SAM-binding methyltransferase superfamily. RNA methyltransferase TrmH family. TrmL subfamily.

The protein localises to the cytoplasm. The catalysed reaction is cytidine(34) in tRNA + S-adenosyl-L-methionine = 2'-O-methylcytidine(34) in tRNA + S-adenosyl-L-homocysteine + H(+). It carries out the reaction 5-carboxymethylaminomethyluridine(34) in tRNA(Leu) + S-adenosyl-L-methionine = 5-carboxymethylaminomethyl-2'-O-methyluridine(34) in tRNA(Leu) + S-adenosyl-L-homocysteine + H(+). Functionally, could methylate the ribose at the nucleotide 34 wobble position in tRNA. In Listeria monocytogenes serotype 4b (strain F2365), this protein is Putative tRNA (cytidine(34)-2'-O)-methyltransferase.